Reading from the N-terminus, the 468-residue chain is MANTPDKSSMWGGRFGGGPAAIMQEINASIPIDKRLWEEDIAASRAHAAMLGACRIISADDAAAIDRGLAQIAEEFAENGVPVDLSLEDIHMTVEARLKELIGEPAGRLHTARSRNDQVATDFRLWTRTACERIDAGLAALQSALLQRADEHADSIMPGFTHLQVAQPVTLGHHLLAYVEMARRDRGRFADARRRLNESPLGAAALAGTGFPVDRDATAAALGFDRPMANSIDAVSDRDFALEFCAAAAIAAIHLSRLAEEIVIWASQPFGFVALPDAWSTGSSIMPQKRNPDAAELVRGRAGLLLGAFQRLAVIVKGLPLTYSKDLQDDKETLFGAFDALALSLAAMTGMVETLSFRTDRMRALAASGYSTATDLADWLVREAGLPFREAHHVVGACVRRAEELGVELPALPAADAAAIHAAVTPDVLAALTVEASVASRMSYGGTAPERVRQAIAAARAAAAQGQD.

This sequence belongs to the lyase 1 family. Argininosuccinate lyase subfamily.

The protein resides in the cytoplasm. It carries out the reaction 2-(N(omega)-L-arginino)succinate = fumarate + L-arginine. Its pathway is amino-acid biosynthesis; L-arginine biosynthesis; L-arginine from L-ornithine and carbamoyl phosphate: step 3/3. The sequence is that of Argininosuccinate lyase from Sphingopyxis alaskensis (strain DSM 13593 / LMG 18877 / RB2256) (Sphingomonas alaskensis).